The primary structure comprises 431 residues: 5-methylthioadenosine/S-adenosylhomocysteine deaminase (431 aa).

Residues H66 and H68 each contribute to the Zn(2+) site. Substrate contacts are provided by E95, R147, and H185. Residue H212 participates in Zn(2+) binding. Substrate is bound by residues E215 and D300. D300 serves as a coordination point for Zn(2+).

Belongs to the metallo-dependent hydrolases superfamily. MTA/SAH deaminase family. Requires Zn(2+) as cofactor.

It carries out the reaction S-adenosyl-L-homocysteine + H2O + H(+) = S-inosyl-L-homocysteine + NH4(+). It catalyses the reaction S-methyl-5'-thioadenosine + H2O + H(+) = S-methyl-5'-thioinosine + NH4(+). Functionally, catalyzes the deamination of 5-methylthioadenosine and S-adenosyl-L-homocysteine into 5-methylthioinosine and S-inosyl-L-homocysteine, respectively. Is also able to deaminate adenosine. The chain is 5-methylthioadenosine/S-adenosylhomocysteine deaminase from Desulfitobacterium hafniense (strain Y51).